Consider the following 372-residue polypeptide: NAD(P)H-quinone oxidoreductase subunit 1 (372 aa).

9 helical membrane passes run 27–47 (AIWM…GVLV), 65–85 (PEYI…KLVF), 97–117 (WLFT…YLIV), 128–148 (IGTG…GLLM), 166–186 (AAQS…IVMM), 204–224 (ILGW…IAAL), 266–286 (VLSA…PIPI), 308–328 (ALGI…AILL), and 347–367 (FLLP…LAFP).

Belongs to the complex I subunit 1 family. NDH-1 is composed of at least 11 different subunits.

The protein localises to the cellular thylakoid membrane. The catalysed reaction is a plastoquinone + NADH + (n+1) H(+)(in) = a plastoquinol + NAD(+) + n H(+)(out). It carries out the reaction a plastoquinone + NADPH + (n+1) H(+)(in) = a plastoquinol + NADP(+) + n H(+)(out). Functionally, NDH-1 shuttles electrons from an unknown electron donor, via FMN and iron-sulfur (Fe-S) centers, to quinones in the respiratory and/or the photosynthetic chain. The immediate electron acceptor for the enzyme in this species is believed to be plastoquinone. Couples the redox reaction to proton translocation, and thus conserves the redox energy in a proton gradient. The protein is NAD(P)H-quinone oxidoreductase subunit 1 of Trichormus variabilis (strain ATCC 29413 / PCC 7937) (Anabaena variabilis).